The primary structure comprises 296 residues: MEHFRNIGIIGRLGSTQVLDTVRRLKKFLLERHLHVILEDTIAEILPGHGLQTSSRKMLGEVCDMVIVVGGDGSLLGAARALARHNVPVLGINRGSLGFLTDIRPDELEVEVAKVLDGHYLVENRFLLQAEVRRHGEAIGQGDALNDVVLHPGKSTRMIEFELYIDGQFVCSQKADGLIVATPTGSTAYALSAGGPIMHPKLDAIVIVPMYPHMLSSRPIVVDGNSELKIVVSKDMQIYPQVSCDGQNHFTCAPGDTITVSKKAQKLRLIHPLDHNYYEVCRTKLGWGSRLGGGGD.

Asp72 functions as the Proton acceptor in the catalytic mechanism. NAD(+) contacts are provided by residues 72–73 (DG), 146–147 (ND), Arg157, Lys174, Asp176, 187–192 (TAYALS), and Gln247.

The protein belongs to the NAD kinase family. A divalent metal cation is required as a cofactor.

Its subcellular location is the cytoplasm. It carries out the reaction NAD(+) + ATP = ADP + NADP(+) + H(+). In terms of biological role, involved in the regulation of the intracellular balance of NAD and NADP, and is a key enzyme in the biosynthesis of NADP. Catalyzes specifically the phosphorylation on 2'-hydroxyl of the adenosine moiety of NAD to yield NADP. In Pseudomonas fluorescens (strain SBW25), this protein is NAD kinase.